We begin with the raw amino-acid sequence, 85 residues long: uncharacterized protein (85 aa).

The stretch at 17–53 (KKRYEMLVQELLKEDDEEREKILAEELELLLDFLKKA) forms a coiled coil.

This is an uncharacterized protein from Archaeoglobus fulgidus (strain ATCC 49558 / DSM 4304 / JCM 9628 / NBRC 100126 / VC-16).